Reading from the N-terminus, the 157-residue chain is SsrA-binding protein (157 aa).

A disordered region spans residues 128-157 (LARGKKQHDKRAAEKERDWEREKQRVMRRG). Residues 137–157 (KRAAEKERDWEREKQRVMRRG) are compositionally biased toward basic and acidic residues.

Belongs to the SmpB family.

It localises to the cytoplasm. Required for rescue of stalled ribosomes mediated by trans-translation. Binds to transfer-messenger RNA (tmRNA), required for stable association of tmRNA with ribosomes. tmRNA and SmpB together mimic tRNA shape, replacing the anticodon stem-loop with SmpB. tmRNA is encoded by the ssrA gene; the 2 termini fold to resemble tRNA(Ala) and it encodes a 'tag peptide', a short internal open reading frame. During trans-translation Ala-aminoacylated tmRNA acts like a tRNA, entering the A-site of stalled ribosomes, displacing the stalled mRNA. The ribosome then switches to translate the ORF on the tmRNA; the nascent peptide is terminated with the 'tag peptide' encoded by the tmRNA and targeted for degradation. The ribosome is freed to recommence translation, which seems to be the essential function of trans-translation. The sequence is that of SsrA-binding protein from Methylococcus capsulatus (strain ATCC 33009 / NCIMB 11132 / Bath).